The primary structure comprises 415 residues: Putative F-box/FBD/LRR-repeat protein At3g49040 (415 aa).

Positions 10–58 constitute an F-box domain; the sequence is EDRISELHEALLVHIMSSLPTKTVVATSVLSKRWRHVWKTVQNLKFVSK. LRR repeat units lie at residues 60–86, 87–114, 143–170, 171–196, and 213–241; these read HQTF…DLEF, SNQL…VLDL, TLTL…HLYK, VHFY…IVHR, and RLTI…NIRR. Residues 272–377 form the FBD domain; it reads ILESLTSAKR…TSLKKATFST (106 aa).

This Arabidopsis thaliana (Mouse-ear cress) protein is Putative F-box/FBD/LRR-repeat protein At3g49040.